A 130-amino-acid chain; its full sequence is Small ribosomal subunit protein uS11 (130 aa).

It belongs to the universal ribosomal protein uS11 family. Part of the 30S ribosomal subunit. Interacts with proteins S7 and S18. Binds to IF-3.

Located on the platform of the 30S subunit, it bridges several disparate RNA helices of the 16S rRNA. Forms part of the Shine-Dalgarno cleft in the 70S ribosome. This chain is Small ribosomal subunit protein uS11, found in Alteromonas mediterranea (strain DSM 17117 / CIP 110805 / LMG 28347 / Deep ecotype).